Here is a 155-residue protein sequence, read N- to C-terminus: 17.6 kDa class I heat shock protein 1 (155 aa).

The sHSP domain maps to 39 to 154; it reads SSSAIANARV…KAQVKSIDIS (116 aa).

This sequence belongs to the small heat shock protein (HSP20) family. In terms of assembly, forms oligomeric structures. Binds to AKR2A.

Its subcellular location is the cytoplasm. In terms of biological role, possesses chaperone activity. In Arabidopsis thaliana (Mouse-ear cress), this protein is 17.6 kDa class I heat shock protein 1 (HSP17.6A).